A 341-amino-acid chain; its full sequence is tRNA N6-adenosine threonylcarbamoyltransferase (341 aa).

Fe cation contacts are provided by His115 and His119. Substrate contacts are provided by residues 137–141 (IVSGG), Asp170, Gly183, Asp187, and Asn276. Asp304 contributes to the Fe cation binding site.

Belongs to the KAE1 / TsaD family. Fe(2+) is required as a cofactor.

Its subcellular location is the cytoplasm. The catalysed reaction is L-threonylcarbamoyladenylate + adenosine(37) in tRNA = N(6)-L-threonylcarbamoyladenosine(37) in tRNA + AMP + H(+). Required for the formation of a threonylcarbamoyl group on adenosine at position 37 (t(6)A37) in tRNAs that read codons beginning with adenine. Is involved in the transfer of the threonylcarbamoyl moiety of threonylcarbamoyl-AMP (TC-AMP) to the N6 group of A37, together with TsaE and TsaB. TsaD likely plays a direct catalytic role in this reaction. This Staphylococcus aureus (strain Mu3 / ATCC 700698) protein is tRNA N6-adenosine threonylcarbamoyltransferase.